The sequence spans 379 residues: MKIMIFICGEGLGHTSRCLALGKELLNAGHEIKFGAYGYSKELVEKTGYTAQEIPSEIKLVGKAGSLDLTGSIEATLKSAQLLGGPKLLKLLREFKPDVVVSDSYYLGTLAAMVLKLPVYLIINQSNMEEFFKNRGVPVRIIGKLTKKFYKEVFEKTDKIIIPDYPLPYTVCRKNLNFAPKLRGKLFYSGPLVREKYEDIDSIPLEKPHVVSLIGGFGYREPIFRKVLTTAMLDPGINYTLISGPSLDPSKLGGVPKNVRILNFVEDTYPYIKSSDAVIAPGGHSTIMEALSFGVPILSFPDEGHSEQESNAAVVEEEGYGRMLSYSTPPEVILECIREVIEDEAYRNKVERLQRLSGELDGPKTIRKLLEKEIGKKAS.

Belongs to the glycosyltransferase 28 family.

This is an uncharacterized protein from Methanosarcina acetivorans (strain ATCC 35395 / DSM 2834 / JCM 12185 / C2A).